The primary structure comprises 119 residues: Large ribosomal subunit protein uL18 (119 aa).

This sequence belongs to the universal ribosomal protein uL18 family. As to quaternary structure, part of the 50S ribosomal subunit; part of the 5S rRNA/L5/L18/L25 subcomplex. Contacts the 5S and 23S rRNAs.

Functionally, this is one of the proteins that bind and probably mediate the attachment of the 5S RNA into the large ribosomal subunit, where it forms part of the central protuberance. The polypeptide is Large ribosomal subunit protein uL18 (Borreliella afzelii (strain PKo) (Borrelia afzelii)).